The chain runs to 157 residues: 2-C-methyl-D-erythritol 2,4-cyclodiphosphate synthase (157 aa).

Residues Asp-9 and His-11 each contribute to the a divalent metal cation site. 4-CDP-2-C-methyl-D-erythritol 2-phosphate contacts are provided by residues 9-11 and 35-36; these read DVH and HS. His-43 provides a ligand contact to a divalent metal cation. 4-CDP-2-C-methyl-D-erythritol 2-phosphate is bound by residues 57 to 59, 62 to 66, 101 to 107, 133 to 136, Phe-140, and Arg-143; these read DIG, FPDTD, AEKPKMA, and TTTE.

This sequence belongs to the IspF family. As to quaternary structure, homotrimer. A divalent metal cation is required as a cofactor.

It catalyses the reaction 4-CDP-2-C-methyl-D-erythritol 2-phosphate = 2-C-methyl-D-erythritol 2,4-cyclic diphosphate + CMP. The protein operates within isoprenoid biosynthesis; isopentenyl diphosphate biosynthesis via DXP pathway; isopentenyl diphosphate from 1-deoxy-D-xylulose 5-phosphate: step 4/6. Functionally, involved in the biosynthesis of isopentenyl diphosphate (IPP) and dimethylallyl diphosphate (DMAPP), two major building blocks of isoprenoid compounds. Catalyzes the conversion of 4-diphosphocytidyl-2-C-methyl-D-erythritol 2-phosphate (CDP-ME2P) to 2-C-methyl-D-erythritol 2,4-cyclodiphosphate (ME-CPP) with a corresponding release of cytidine 5-monophosphate (CMP). The sequence is that of 2-C-methyl-D-erythritol 2,4-cyclodiphosphate synthase from Listeria monocytogenes serotype 4b (strain F2365).